A 361-amino-acid polypeptide reads, in one-letter code: MSKRAFNFCAGPAALPDAVLQRAQAELLDWRGKGLSVMEMSHRSDDYVAIASKAEHDLRDLLDIPSDYKVLFLQGGASQQFAEIPLNLLPEDGVADYIDTGIWSKKAIEEARRYGRVNVAASAKEYDYFAIPGQNEWNLTKDAAYVHYASNETIGGLEFDWIPETGGVPLVTDMSSDILSRPLDVSRFGLIYAGAQKNIGPSGLVVVIVREDLLGRARSACPTMLNYKIAADNGSMYNTPATYSWYLSGLVFEWLKEQGGVTAMERRNRAKKDLLYKTIDASDFYTNPIQPSARSWMNVPFRLADERLDKPFLEGAEARGLLNLKGHRSVGGMRASIYNALGLDAVEALVAYMAEFEKERG.

R43 serves as a coordination point for L-glutamate. Residues 77 to 78 (AS), W103, T153, D173, and Q196 each bind pyridoxal 5'-phosphate. An N6-(pyridoxal phosphate)lysine modification is found at K197. 238 to 239 (NT) is a pyridoxal 5'-phosphate binding site.

This sequence belongs to the class-V pyridoxal-phosphate-dependent aminotransferase family. SerC subfamily. As to quaternary structure, homodimer. The cofactor is pyridoxal 5'-phosphate.

Its subcellular location is the cytoplasm. It catalyses the reaction O-phospho-L-serine + 2-oxoglutarate = 3-phosphooxypyruvate + L-glutamate. The enzyme catalyses 4-(phosphooxy)-L-threonine + 2-oxoglutarate = (R)-3-hydroxy-2-oxo-4-phosphooxybutanoate + L-glutamate. It participates in amino-acid biosynthesis; L-serine biosynthesis; L-serine from 3-phospho-D-glycerate: step 2/3. The protein operates within cofactor biosynthesis; pyridoxine 5'-phosphate biosynthesis; pyridoxine 5'-phosphate from D-erythrose 4-phosphate: step 3/5. Catalyzes the reversible conversion of 3-phosphohydroxypyruvate to phosphoserine and of 3-hydroxy-2-oxo-4-phosphonooxybutanoate to phosphohydroxythreonine. This Pseudomonas paraeruginosa (strain DSM 24068 / PA7) (Pseudomonas aeruginosa (strain PA7)) protein is Phosphoserine aminotransferase.